The sequence spans 774 residues: RNA exonuclease 5 (774 aa).

A compositionally biased stretch (basic and acidic residues) spans Met-1–Arg-19. The interval Met-1 to Pro-22 is disordered. The 149-residue stretch at Leu-228–Ala-376 folds into the Exonuclease domain. 2 RRM domains span residues Ser-505–Thr-579 and Gly-600–His-679.

The sequence is that of RNA exonuclease 5 from Homo sapiens (Human).